A 341-amino-acid chain; its full sequence is LIM and senescent cell antigen-like-containing domain protein 2 (341 aa).

5 consecutive LIM zinc-binding domains span residues 13–74 (AMCQ…LFAP), 76–133 (CGFC…EKAK), 138–195 (FICQ…KMGI), 196–255 (PICG…LFGD), and 256–315 (VCYN…FPLE). Residue Ser328 is modified to Phosphoserine.

In terms of assembly, interacts with integrin-linked protein kinase 1 (ILK) via the first LIM domain, and in competition with LIMS1. Part of the heterotrimeric IPP complex composed of integrin-linked kinase (ILK), LIMS1 or LIMS2, and PARVA. Interacts with TGFB1I1. Detected in heart, lung, kidney, liver, urinary bladder, fat, skin, skeletal muscle, uterus, large intestine and testis.

The protein resides in the cell junction. It localises to the focal adhesion. The protein localises to the cell membrane. Its function is as follows. Adapter protein in a cytoplasmic complex linking beta-integrins to the actin cytoskeleton, bridges the complex to cell surface receptor tyrosine kinases and growth factor receptors. This is LIM and senescent cell antigen-like-containing domain protein 2 (Lims2) from Mus musculus (Mouse).